The sequence spans 31 residues: Delta-conotoxin-like ErVIA (31 aa).

A propeptide spanning residues 1–4 is cleaved from the precursor; the sequence is LNKR. 3 disulfides stabilise this stretch: cysteine 5-cysteine 21, cysteine 12-cysteine 25, and cysteine 20-cysteine 29.

The protein belongs to the conotoxin O1 superfamily. Expressed by the venom duct.

The protein resides in the secreted. Functionally, this toxin activates voltage-gated sodium channels. It shifts the voltage-dependence of activation to more hyperpolarized potentials but has only little effect on channel inactivation. It is active on Nav1.3/SCN3A (EC(50)=3.98 nM), Nav1.4/SCN4A (EC(50)=4.99 nM), Nav1.6/SCN8A (EC(50)=1.27 nM) and Nav1.7/SCN9A (EC(50)=2.42 nM) voltage-gated sodium channels. In vivo, it induces nocifensive or pain-like behaviors in mice when injected intraplantarly. The protein is Delta-conotoxin-like ErVIA of Conus eburneus (Ivory cone).